We begin with the raw amino-acid sequence, 243 residues long: UPF0246 protein SAK_2020 (243 aa).

This sequence belongs to the UPF0246 family.

The polypeptide is UPF0246 protein SAK_2020 (Streptococcus agalactiae serotype Ia (strain ATCC 27591 / A909 / CDC SS700)).